The primary structure comprises 583 residues: Bifunctional dihydrofolate reductase-thymidylate synthase (583 aa).

The region spanning 9–229 is the DHFR domain; the sequence is DIYAICACCK…TTLDFVIYSK (221 aa). 36-42 contributes to the NADP(+) binding site; it reads GLGNEGG. Aspartate 51 contacts substrate. NADP(+)-binding positions include 104–106 and 125–128; these read KAS and LSRT. Isoleucine 165, tyrosine 171, and threonine 186 together coordinate substrate. 166–173 contacts NADP(+); it reads GGASVYKE. Residues 298 to 583 form a thymidylate synthase region; sequence HPEYQYLNII…HDKISMDMAA (286 aa). A dUMP-binding site is contributed by arginine 320. Cysteine 465 is an active-site residue. Residues histidine 466, 484 to 488, asparagine 496, and 526 to 528 each bind dUMP; these read QRSCD and HVY.

This sequence in the N-terminal section; belongs to the dihydrofolate reductase family. It in the C-terminal section; belongs to the thymidylate synthase family. Homodimer.

It carries out the reaction (6S)-5,6,7,8-tetrahydrofolate + NADP(+) = 7,8-dihydrofolate + NADPH + H(+). The enzyme catalyses dUMP + (6R)-5,10-methylene-5,6,7,8-tetrahydrofolate = 7,8-dihydrofolate + dTMP. The protein operates within cofactor biosynthesis; tetrahydrofolate biosynthesis; 5,6,7,8-tetrahydrofolate from 7,8-dihydrofolate: step 1/1. In terms of biological role, bifunctional enzyme. Involved in de novo dTMP biosynthesis. Key enzyme in folate metabolism. Catalyzes an essential reaction for de novo glycine and purine synthesis, DNA precursor synthesis, and for the conversion of dUMP to dTMP. The polypeptide is Bifunctional dihydrofolate reductase-thymidylate synthase (Plasmodium chabaudi).